Reading from the N-terminus, the 249-residue chain is Pleckstrin homology domain-containing family F member 2 (249 aa).

The residue at position 16 (Ser16) is a Phosphoserine. Residues 35–131 (VLIGEGVLTK…WMNHINKCVT (97 aa)) enclose the PH domain. An N6-acetyllysine modification is found at Lys44. The FYVE-type zinc-finger motif lies at 152–212 (DSEATVCMRC…ICDFCYDLLS (61 aa)). Positions 158, 161, 175, 178, 183, 186, 204, and 207 each coordinate Zn(2+). Residues 221–233 (PTRSDSYSQSLKS) are compositionally biased toward polar residues. The interval 221 to 249 (PTRSDSYSQSLKSPLNDASDDDDDDDSSD) is disordered. The span at 238-249 (ASDDDDDDDSSD) shows a compositional bias: acidic residues. Phosphoserine is present on residues Ser239 and Ser248.

As to quaternary structure, may interact with EEA1. In terms of tissue distribution, expressed in brain, stomach and thymus, as well as in kidney, spleen, and skeletal muscle. Also expressed in peripheral blood mononuclear cells and dendritic cells.

It is found in the early endosome membrane. The protein resides in the endoplasmic reticulum. May play a role in early endosome fusion upstream of RAB5, hence regulating receptor trafficking and fluid-phase transport. Enhances cellular sensitivity to TNF-induced apoptosis. The chain is Pleckstrin homology domain-containing family F member 2 (Plekhf2) from Mus musculus (Mouse).